The following is a 395-amino-acid chain: Elongation factor Tu (395 aa).

The tr-type G domain occupies 10–204; sequence KPHLNIGTIG…TVDNYIKEPI (195 aa). Residues 19–26 form a G1 region; it reads GHVDHGKT. 19–26 serves as a coordination point for GTP; it reads GHVDHGKT. Residue Thr26 participates in Mg(2+) binding. A G2 region spans residues 60–64; that stretch reads GITIN. A G3 region spans residues 81–84; the sequence is DCPG. GTP contacts are provided by residues 81–85 and 136–139; these read DCPGH and NKVD. Positions 136–139 are G4; sequence NKVD. The tract at residues 174 to 176 is G5; it reads SAL.

Belongs to the TRAFAC class translation factor GTPase superfamily. Classic translation factor GTPase family. EF-Tu/EF-1A subfamily. As to quaternary structure, monomer.

It is found in the cytoplasm. The catalysed reaction is GTP + H2O = GDP + phosphate + H(+). GTP hydrolase that promotes the GTP-dependent binding of aminoacyl-tRNA to the A-site of ribosomes during protein biosynthesis. The protein is Elongation factor Tu of Karelsulcia muelleri (strain GWSS) (Sulcia muelleri).